The chain runs to 215 residues: MITIALPKGALLEDSISIFKKAGLNFSDALLENSRSLTVESKCKRAKALLVRNGDVPVYVSYGQADLGIVGYDVLQESELKVAKLLDLEFGGCHMSLAVKNNSNYLKPTDLPANCKVASKFTKTARAYFDDLNIPVEIVHLTGSVELGPITGMAEAIVDLVATGKTLKENGLSKIDDLFYSTARLIANPLSLRLDSNPLRDVILSIESSKDILNI.

Belongs to the ATP phosphoribosyltransferase family. Short subfamily. As to quaternary structure, heteromultimer composed of HisG and HisZ subunits.

It is found in the cytoplasm. The enzyme catalyses 1-(5-phospho-beta-D-ribosyl)-ATP + diphosphate = 5-phospho-alpha-D-ribose 1-diphosphate + ATP. Its pathway is amino-acid biosynthesis; L-histidine biosynthesis; L-histidine from 5-phospho-alpha-D-ribose 1-diphosphate: step 1/9. Its function is as follows. Catalyzes the condensation of ATP and 5-phosphoribose 1-diphosphate to form N'-(5'-phosphoribosyl)-ATP (PR-ATP). Has a crucial role in the pathway because the rate of histidine biosynthesis seems to be controlled primarily by regulation of HisG enzymatic activity. This is ATP phosphoribosyltransferase from Prochlorococcus marinus subsp. pastoris (strain CCMP1986 / NIES-2087 / MED4).